The primary structure comprises 332 residues: Leucine carboxyl methyltransferase 1 (332 aa).

Residues 1–23 (MAASLRRPSFTTCSSPTDTDDEG) form a disordered region. S-adenosyl-L-methionine contacts are provided by residues arginine 71, glycine 96, aspartate 120, 169 to 170 (DL), and glutamate 196.

It belongs to the methyltransferase superfamily. LCMT family.

The enzyme catalyses [phosphatase 2A protein]-C-terminal L-leucine + S-adenosyl-L-methionine = [phosphatase 2A protein]-C-terminal L-leucine methyl ester + S-adenosyl-L-homocysteine. Functionally, methylates the carboxyl group of the C-terminal leucine residue of protein phosphatase 2A catalytic subunits to form alpha-leucine ester residues. The sequence is that of Leucine carboxyl methyltransferase 1 (LCMT1) from Bos taurus (Bovine).